The chain runs to 254 residues: tRNA uridine(34) hydroxylase (254 aa).

The region spanning 123-217 (QDPNVILLDT…YLESIPEGES (95 aa)) is the Rhodanese domain. C177 (cysteine persulfide intermediate) is an active-site residue.

It belongs to the TrhO family.

The catalysed reaction is uridine(34) in tRNA + AH2 + O2 = 5-hydroxyuridine(34) in tRNA + A + H2O. Functionally, catalyzes oxygen-dependent 5-hydroxyuridine (ho5U) modification at position 34 in tRNAs. The protein is tRNA uridine(34) hydroxylase of Legionella pneumophila (strain Lens).